A 435-amino-acid chain; its full sequence is Xylose isomerase (435 aa).

Catalysis depends on residues H99 and D102. E230, E266, H269, D294, D305, D307, and D337 together coordinate Mg(2+).

Belongs to the xylose isomerase family. In terms of assembly, homotetramer. The cofactor is Mg(2+).

It localises to the cytoplasm. It carries out the reaction alpha-D-xylose = alpha-D-xylulofuranose. The sequence is that of Xylose isomerase from Enterococcus faecalis (strain ATCC 700802 / V583).